We begin with the raw amino-acid sequence, 260 residues long: BTB/POZ domain-containing protein KCTD21 (260 aa).

Positions 3–72 (DPITLNVGGK…LRTSHLDLPE (70 aa)) constitute a BTB domain. A coiled-coil region spans residues 88-112 (QVQPLIEALQEKEVELSKAEKNAML).

In terms of assembly, homopentamer. Interacts with KCTD11; KCTD21 and KCTD11 may associate in pentameric assemblies. Interacts (via BTB domain) with CUL3; indicative for a participation in a BCR (BTB-CUL3-RBX1) E3 ubiquitin-protein ligase complex. Highly expressed in cerebellum and brain. Expressed in adult cerebellum (at protein level).

It functions in the pathway protein modification; protein ubiquitination. Its function is as follows. Probable substrate-specific adapter of a BCR (BTB-CUL3-RBX1) E3 ubiquitin-protein ligase complex mediating the ubiquitination and subsequent proteasomal degradation of target proteins. Promotes the ubiquitination of HDAC1. Can function as antagonist of the Hedgehog pathway by affecting the nuclear transfer of transcription factor GLI1; the function probably occurs via HDAC1 down-regulation, keeping GLI1 acetylated and inactive. Inhibits cell growth and tumorigenicity of medulloblastoma (MDB). In Mus musculus (Mouse), this protein is BTB/POZ domain-containing protein KCTD21 (Kctd21).